A 161-amino-acid polypeptide reads, in one-letter code: Cyclic pyranopterin monophosphate synthase (161 aa).

Substrate is bound by residues 75–77 and 113–114; these read LCH and ME. Residue D128 is part of the active site.

The protein belongs to the MoaC family. As to quaternary structure, homohexamer; trimer of dimers.

It catalyses the reaction (8S)-3',8-cyclo-7,8-dihydroguanosine 5'-triphosphate = cyclic pyranopterin phosphate + diphosphate. It participates in cofactor biosynthesis; molybdopterin biosynthesis. Catalyzes the conversion of (8S)-3',8-cyclo-7,8-dihydroguanosine 5'-triphosphate to cyclic pyranopterin monophosphate (cPMP). The chain is Cyclic pyranopterin monophosphate synthase from Escherichia coli O9:H4 (strain HS).